The primary structure comprises 206 residues: Small ribosomal subunit protein uS3 (206 aa).

Residues 39 to 107 (IRSYINESFK…SVEVNVVGVK (69 aa)) form the KH type-2 domain.

Belongs to the universal ribosomal protein uS3 family. As to quaternary structure, part of the 30S ribosomal subunit. Forms a tight complex with proteins S10 and S14.

Functionally, binds the lower part of the 30S subunit head. Binds mRNA in the 70S ribosome, positioning it for translation. The chain is Small ribosomal subunit protein uS3 from Wolbachia pipientis subsp. Culex pipiens (strain wPip).